Consider the following 130-residue polypeptide: Large ribosomal subunit protein eL32 (130 aa).

It belongs to the eukaryotic ribosomal protein eL32 family. Part of the 50S ribosomal subunit.

In Pyrococcus furiosus (strain ATCC 43587 / DSM 3638 / JCM 8422 / Vc1), this protein is Large ribosomal subunit protein eL32.